The sequence spans 349 residues: 4-hydroxy-3-methylbut-2-enyl diphosphate reductase (349 aa).

Cys-18 contacts [4Fe-4S] cluster. (2E)-4-hydroxy-3-methylbut-2-enyl diphosphate-binding residues include His-47 and His-83. Residues His-47 and His-83 each contribute to the dimethylallyl diphosphate site. His-47 and His-83 together coordinate isopentenyl diphosphate. Cys-105 provides a ligand contact to [4Fe-4S] cluster. His-133 lines the (2E)-4-hydroxy-3-methylbut-2-enyl diphosphate pocket. Residue His-133 coordinates dimethylallyl diphosphate. Residue His-133 coordinates isopentenyl diphosphate. The active-site Proton donor is the Glu-135. Thr-174 serves as a coordination point for (2E)-4-hydroxy-3-methylbut-2-enyl diphosphate. Residue Cys-204 participates in [4Fe-4S] cluster binding. Positions 232, 233, 234, and 277 each coordinate (2E)-4-hydroxy-3-methylbut-2-enyl diphosphate. Residues Ser-232, Ser-233, Asn-234, and Ser-277 each coordinate dimethylallyl diphosphate. 4 residues coordinate isopentenyl diphosphate: Ser-232, Ser-233, Asn-234, and Ser-277.

This sequence belongs to the IspH family. [4Fe-4S] cluster is required as a cofactor.

The enzyme catalyses isopentenyl diphosphate + 2 oxidized [2Fe-2S]-[ferredoxin] + H2O = (2E)-4-hydroxy-3-methylbut-2-enyl diphosphate + 2 reduced [2Fe-2S]-[ferredoxin] + 2 H(+). It catalyses the reaction dimethylallyl diphosphate + 2 oxidized [2Fe-2S]-[ferredoxin] + H2O = (2E)-4-hydroxy-3-methylbut-2-enyl diphosphate + 2 reduced [2Fe-2S]-[ferredoxin] + 2 H(+). It functions in the pathway isoprenoid biosynthesis; dimethylallyl diphosphate biosynthesis; dimethylallyl diphosphate from (2E)-4-hydroxy-3-methylbutenyl diphosphate: step 1/1. The protein operates within isoprenoid biosynthesis; isopentenyl diphosphate biosynthesis via DXP pathway; isopentenyl diphosphate from 1-deoxy-D-xylulose 5-phosphate: step 6/6. In terms of biological role, catalyzes the conversion of 1-hydroxy-2-methyl-2-(E)-butenyl 4-diphosphate (HMBPP) into a mixture of isopentenyl diphosphate (IPP) and dimethylallyl diphosphate (DMAPP). Acts in the terminal step of the DOXP/MEP pathway for isoprenoid precursor biosynthesis. The polypeptide is 4-hydroxy-3-methylbut-2-enyl diphosphate reductase (Bartonella bacilliformis (strain ATCC 35685 / KC583 / Herrer 020/F12,63)).